Here is a 708-residue protein sequence, read N- to C-terminus: Caprin-1 (708 aa).

2 stretches are compositionally biased toward low complexity: residues 1–15 (MPSA…SKSS) and 22–37 (GSSG…APAS). Positions 1-48 (MPSATSHSGSGSKSSGPPPPSGSSGNEAGAGAAAPASQHPMTGTGAVQ) are disordered. An N-acetylproline modification is found at Pro2. Ser10 carries the phosphoserine modification. Residues 58–92 (VIDKKLRNLEKKKGKLDDYQERMNKGERLNQDQLD) are a coiled coil. At Ser113 the chain carries Phosphoserine. Residues 123–151 (KTIKKTARREQLMREEAEQKRLKTVLELQ) are a coiled coil. Arg163 carries the post-translational modification Omega-N-methylarginine. Residues 258–287 (EEAASAPTVEDQAAEAEPEPVEEYTEQNEV) are disordered. The span at 269–287 (QAAEAEPEPVEEYTEQNEV) shows a compositional bias: acidic residues. Ser333 and Ser341 each carry phosphoserine. Positions 358–379 (QDLMAQMQGPYNFIQDSMLDFE) are G3BP1-binding. The segment covering 415–452 (LAQPNQVSVQPEATQVPLVSSTSEGYTASQPLYQPSHA) has biased composition (polar residues). 4 disordered regions span residues 415–459 (LAQP…RPQK), 473–497 (TDQT…GTSK), 521–559 (NAPV…QTEL), and 571–708 (YHGS…QQVN). Low complexity-rich tracts occupy residues 475-489 (QTTA…SQPQ) and 535-559 (QQNQ…QTEL). Residues 572-603 (HGSQDQPHQVTGNHQQPPQQNTGFPRSNQPYY) show a composition bias toward polar residues. Tyr623 carries the post-translational modification Phosphotyrosine. Omega-N-methylarginine is present on residues Arg624 and Arg631. Phosphotyrosine occurs at positions 634 and 637. Arg638 bears the Omega-N-methylarginine mark. Polar residues predominate over residues 640–656 (SFSTNTPNSGYTQSQFS). Residues Ser642 and Ser648 are each glycosylated (O-linked (GlcNAc) serine). Residues Tyr650, Tyr661, Tyr664, and Tyr669 each carry the phosphotyrosine modification. Composition is skewed to low complexity over residues 675–685 (RGSGQSGPRGA) and 696–708 (NRGM…QQVN). Residue Arg697 is modified to Asymmetric dimethylarginine; alternate. Residue Arg697 is modified to Omega-N-methylarginine; alternate.

It belongs to the caprin family. As to quaternary structure, may form homomultimers. Interacts with G3BP1; interaction is direct and promotes stress granule formation. Interacts with G3BP2; interaction is direct and promotes stress granule formation. Interacts with PQBP1. Interacts with DDX3X. Interacts (when phosphorylated by EPHA4) with FMR1; interaction with FMR1 promotes formation of a membraneless compartment. Post-translationally, tyrosine phosphorylation by EPHA4 promotes interaction with FMR1 and liquid-liquid phase separation (LLPS) for the formation of a membraneless compartment that concentrates mRNAs with associated regulatory factors. In terms of processing, O-glycosylated (O-GlcNAcylated), in a cell cycle-dependent manner. O-glycosylation by OGT inhibit ability to undergo liquid-liquid phase separation (LLPS).

It localises to the cytoplasm. The protein localises to the cytoplasmic ribonucleoprotein granule. Its subcellular location is the cytosol. It is found in the cell projection. The protein resides in the dendrite. It localises to the lamellipodium. Its activity is regulated as follows. Ability to mediate liquid-liquid phase separation is regulated by ATP: moderate concentrations of ATP enhance phase separation, whereas high concentrations of ATP lead to inhibition of phase separation. MRNA-binding protein that acts as a regulator of mRNAs transport, translation and/or stability, and which is involved in neurogenesis, synaptic plasticity in neurons and cell proliferation and migration in multiple cell types. Plays an essential role in cytoplasmic stress granule formation. Acts as an mRNA regulator by mediating formation of some phase-separated membraneless compartment: undergoes liquid-liquid phase separation upon binding to target mRNAs, leading to assemble mRNAs into cytoplasmic ribonucleoprotein granules that concentrate mRNAs with associated regulatory factors. Undergoes liquid-liquid phase separation following phosphorylation and interaction with FMR1, promoting formation of cytoplasmic ribonucleoprotein granules that concentrate mRNAs with factors that inhibit translation and mediate deadenylation of target mRNAs. In these cytoplasmic ribonucleoprotein granules, CAPRIN1 mediates recruitment of CNOT7 deadenylase, leading to mRNA deadenylation and degradation. Binds directly and selectively to MYC and CCND2 mRNAs. In neuronal cells, directly binds to several mRNAs associated with RNA granules, including BDNF, CAMK2A, CREB1, MAP2, NTRK2 mRNAs, as well as to GRIN1 and KPNB1 mRNAs, but not to rRNAs. This chain is Caprin-1 (CAPRIN1), found in Bos taurus (Bovine).